Here is a 275-residue protein sequence, read N- to C-terminus: Phosphate import ATP-binding protein PstB 1 (275 aa).

Residues 22-261 form the ABC transporter domain; sequence IETRDLSVYY…DRTEKIFNSP (240 aa). 54–61 is an ATP binding site; the sequence is GPSGCGKS.

Belongs to the ABC transporter superfamily. Phosphate importer (TC 3.A.1.7) family. As to quaternary structure, the complex is composed of two ATP-binding proteins (PstB), two transmembrane proteins (PstC and PstA) and a solute-binding protein (PstS).

Its subcellular location is the cell inner membrane. The enzyme catalyses phosphate(out) + ATP + H2O = ADP + 2 phosphate(in) + H(+). Its function is as follows. Part of the ABC transporter complex PstSACB involved in phosphate import. Responsible for energy coupling to the transport system. The sequence is that of Phosphate import ATP-binding protein PstB 1 from Synechococcus sp. (strain JA-3-3Ab) (Cyanobacteria bacterium Yellowstone A-Prime).